A 256-amino-acid polypeptide reads, in one-letter code: DNA polymerase sliding clamp 2 (256 aa).

It belongs to the PCNA family. Homotrimer. The subunits circularize to form a toroid; DNA passes through its center. Replication factor C (RFC) is required to load the toroid on the DNA.

Sliding clamp subunit that acts as a moving platform for DNA processing. Responsible for tethering the catalytic subunit of DNA polymerase and other proteins to DNA during high-speed replication. This chain is DNA polymerase sliding clamp 2, found in Pyrobaculum aerophilum (strain ATCC 51768 / DSM 7523 / JCM 9630 / CIP 104966 / NBRC 100827 / IM2).